The following is a 340-amino-acid chain: tRNA dimethylallyltransferase (340 aa).

The disordered stretch occupies residues 1–25 (MDQNRSPNGRDCREPPSPSSTARPG). 31 to 38 (GPTATGKS) contacts ATP. 33-38 (TATGKS) is a substrate binding site. The tract at residues 56-59 (DSRQ) is interaction with substrate tRNA.

The protein belongs to the IPP transferase family. Monomer. The cofactor is Mg(2+).

It carries out the reaction adenosine(37) in tRNA + dimethylallyl diphosphate = N(6)-dimethylallyladenosine(37) in tRNA + diphosphate. In terms of biological role, catalyzes the transfer of a dimethylallyl group onto the adenine at position 37 in tRNAs that read codons beginning with uridine, leading to the formation of N6-(dimethylallyl)adenosine (i(6)A). This Synechococcus sp. (strain JA-3-3Ab) (Cyanobacteria bacterium Yellowstone A-Prime) protein is tRNA dimethylallyltransferase.